Consider the following 432-residue polypeptide: Adenylosuccinate synthetase (432 aa).

GTP contacts are provided by residues 13–19 and 41–43; these read GDEGKGK and GHT. The Proton acceptor role is filled by aspartate 14. The Mg(2+) site is built by aspartate 14 and glycine 41. Residues 14-17, 39-42, threonine 130, arginine 144, glutamine 225, threonine 240, and arginine 304 each bind IMP; these read DEGK and NAGH. Histidine 42 (proton donor) is an active-site residue. 300 to 306 contacts substrate; sequence ATTGRRR. GTP-binding positions include arginine 306, 332–334, and 414–416; these read KLD and STG.

Belongs to the adenylosuccinate synthetase family. In terms of assembly, homodimer. Requires Mg(2+) as cofactor.

The protein resides in the cytoplasm. The catalysed reaction is IMP + L-aspartate + GTP = N(6)-(1,2-dicarboxyethyl)-AMP + GDP + phosphate + 2 H(+). The protein operates within purine metabolism; AMP biosynthesis via de novo pathway; AMP from IMP: step 1/2. In terms of biological role, plays an important role in the de novo pathway of purine nucleotide biosynthesis. Catalyzes the first committed step in the biosynthesis of AMP from IMP. The sequence is that of Adenylosuccinate synthetase from Methylococcus capsulatus (strain ATCC 33009 / NCIMB 11132 / Bath).